Consider the following 1293-residue polypeptide: Phosphoribosylformylglycinamidine synthase (1293 aa).

ATP-binding positions include 305–316 and Ala-676; that span reads GAATGSGGEIRD. Mg(2+) contacts are provided by Asp-677, Glu-716, Asn-720, and Asp-884. Position 886 (Ser-886) interacts with ATP. A Glutamine amidotransferase type-1 domain is found at 1040–1293; it reads MAILREQGVN…MFRNARVKLG (254 aa). Cys-1133 functions as the Nucleophile in the catalytic mechanism. Active-site residues include His-1258 and Glu-1260.

This sequence in the N-terminal section; belongs to the FGAMS family. Monomer.

It is found in the cytoplasm. It carries out the reaction N(2)-formyl-N(1)-(5-phospho-beta-D-ribosyl)glycinamide + L-glutamine + ATP + H2O = 2-formamido-N(1)-(5-O-phospho-beta-D-ribosyl)acetamidine + L-glutamate + ADP + phosphate + H(+). It functions in the pathway purine metabolism; IMP biosynthesis via de novo pathway; 5-amino-1-(5-phospho-D-ribosyl)imidazole from N(2)-formyl-N(1)-(5-phospho-D-ribosyl)glycinamide: step 1/2. Phosphoribosylformylglycinamidine synthase involved in the purines biosynthetic pathway. Catalyzes the ATP-dependent conversion of formylglycinamide ribonucleotide (FGAR) and glutamine to yield formylglycinamidine ribonucleotide (FGAM) and glutamate. This chain is Phosphoribosylformylglycinamidine synthase, found in Shewanella denitrificans (strain OS217 / ATCC BAA-1090 / DSM 15013).